Reading from the N-terminus, the 955-residue chain is uncharacterized protein (955 aa).

The Importin N-terminal domain maps to 23-90 (ANNYLEEFQK…RNSLLQLFLA (68 aa)).

This is an uncharacterized protein from Schizosaccharomyces pombe (strain 972 / ATCC 24843) (Fission yeast).